The following is a 143-amino-acid chain: uncharacterized protein (143 aa).

Residues 1-21 (MAAMDTGQRADPSNPGDKEGD) are disordered.

This is an uncharacterized protein from Homo sapiens (Human).